Here is a 185-residue protein sequence, read N- to C-terminus: Ribosome-recycling factor (185 aa).

The protein belongs to the RRF family.

It localises to the cytoplasm. In terms of biological role, responsible for the release of ribosomes from messenger RNA at the termination of protein biosynthesis. May increase the efficiency of translation by recycling ribosomes from one round of translation to another. The sequence is that of Ribosome-recycling factor from Mycolicibacterium vanbaalenii (strain DSM 7251 / JCM 13017 / BCRC 16820 / KCTC 9966 / NRRL B-24157 / PYR-1) (Mycobacterium vanbaalenii).